The following is a 108-amino-acid chain: PTS system cellobiose-specific EIIB component (108 aa).

The PTS EIIB type-3 domain maps to Asp-3 to Asn-108. Cys-10 acts as the Phosphocysteine intermediate in catalysis. Residue Cys-10 is modified to Phosphocysteine; by EIIA.

The enzyme catalyses D-cellobiose(out) + N(pros)-phospho-L-histidyl-[protein] = 6-phospho-beta-D-glucosyl-(1-&gt;4)-D-glucose(in) + L-histidyl-[protein]. The phosphoenolpyruvate-dependent sugar phosphotransferase system (sugar PTS), a major carbohydrate active transport system, catalyzes the phosphorylation of incoming sugar substrates concomitantly with their translocation across the cell membrane. Involved in cellobiose transport with PtcA and CelB. This system can also transport lactose. The chain is PTS system cellobiose-specific EIIB component from Lactococcus lactis subsp. lactis (strain IL1403) (Streptococcus lactis).